A 259-amino-acid chain; its full sequence is Dihydroorotate dehydrogenase B (NAD(+)), electron transfer subunit (259 aa).

One can recognise an FAD-binding FR-type domain in the interval 2–102; that stretch reads MQKQNMIVVN…LGPLGHGFPV (101 aa). FAD contacts are provided by residues 53-56, 70-72, and 77-78; these read RPIS, LYR, and GT. Positions 221, 226, 229, and 246 each coordinate [2Fe-2S] cluster.

It belongs to the PyrK family. Heterotetramer of 2 PyrK and 2 PyrD type B subunits. It depends on [2Fe-2S] cluster as a cofactor. Requires FAD as cofactor.

Its pathway is pyrimidine metabolism; UMP biosynthesis via de novo pathway; orotate from (S)-dihydroorotate (NAD(+) route): step 1/1. In terms of biological role, responsible for channeling the electrons from the oxidation of dihydroorotate from the FMN redox center in the PyrD type B subunit to the ultimate electron acceptor NAD(+). The polypeptide is Dihydroorotate dehydrogenase B (NAD(+)), electron transfer subunit (Bacillus mycoides (strain KBAB4) (Bacillus weihenstephanensis)).